The following is a 172-amino-acid chain: R-phycocyanin-2 beta chain (172 aa).

An N4-methylasparagine modification is found at N72. C82 contacts (2R,3E)-phycocyanobilin. Residue C153 participates in (2R,3E)-phycoerythrobilin binding.

Belongs to the phycobiliprotein family. Heterodimer of an alpha and a beta chain. Contains two covalently linked bilin chromophores.

The protein localises to the cellular thylakoid membrane. Its function is as follows. Light-harvesting photosynthetic bile pigment-protein from the phycobiliprotein complex. The sequence is that of R-phycocyanin-2 beta chain (rpcB) from Synechococcus sp. (strain WH8103).